Here is a 396-residue protein sequence, read N- to C-terminus: FAD-dependent monooxygenase phomE' (396 aa).

Glu-3 is a binding site for FAD. Active-site residues include Arg-158 and Tyr-196. Residues Asp-277 and Gly-290 each contribute to the FAD site.

Belongs to the paxM FAD-dependent monooxygenase family. As to quaternary structure, monomer. Requires FAD as cofactor.

Its function is as follows. FAD-dependent monooxygenase; part of the gene cluster that mediates the biosynthesis of the phomopsins, a group of hexapeptide mycotoxins which infects lupins and causes lupinosis disease in livestock. The role of phomE' within the phomopsins biosynthesis pathway has still to be determined. The pathway starts with the processing of the precursor phomA by several endopeptidases including kexin proteases as well as the cluster-specific S41 family peptidase phomP1 and the oligopeptidase phomG to produce 10 identical copies of the hexapeptide Tyr-Val-Ile-Pro-Ile-Asp. After being excised from the precursor peptide, the core peptides are cyclized and modified post-translationally by enzymes encoded within the gene cluster. The timing and order of proteolysis of the phomA precursor and PTMs are still unknown. Two tyrosinase-like enzymes, phomQ1 and phomQ2, catalyze the chlorination and hydroxylation of Tyr, respectively. PhomYb, is proposed to be involved in the construction of the macrocyclic structure. The other 4 ustYa family proteins may be involved in PTMs that generate the unique structure of phomopsin A. PhomYa is required for the hydroxylation of C-beta of Tyr. PhomYc, phomYd, and phomYe are responsible for the biosynthesis of 2,3-dehydroisoleucine (dIle), 2,3-dehydroaspartic acid (dAsp), and 3,4-dehydroproline (dPro), respectively. While dIle formation by phomYc is indispensable for the installation of dAsp by phomYd, the order of the other PTMs have not been elucidated yet. Most of the biosynthetic enzymes likely have broad substrate specificity, and thus, there might be a metabolic grid from a precursor to phomopsin A. The enzyme(s) responsible for the biosynthesis of 3,4-dehydrovaline (dVal) have also not been identified yet. Finally, phomM acts as an S-adenosylmethionine-dependent alpha-N-methyltransferase that catalyzes two successive N-methylation reactions, converting N-desmethyl-phomopsin A to phomopsin A and phomopsin A further to an N,N-dimethylated congener called phomopsin E. This Diaporthe leptostromiformis (Lupinosis disease fungus) protein is FAD-dependent monooxygenase phomE'.